We begin with the raw amino-acid sequence, 384 residues long: UDP-N-acetylglucosamine--N-acetylmuramyl-(pentapeptide) pyrophosphoryl-undecaprenol N-acetylglucosamine transferase (384 aa).

Residues Thr-17–Gly-19, Asn-131, Arg-172, Ser-200, and Gln-301 contribute to the UDP-N-acetyl-alpha-D-glucosamine site.

It belongs to the glycosyltransferase 28 family. MurG subfamily.

The protein resides in the cell inner membrane. It carries out the reaction di-trans,octa-cis-undecaprenyl diphospho-N-acetyl-alpha-D-muramoyl-L-alanyl-D-glutamyl-meso-2,6-diaminopimeloyl-D-alanyl-D-alanine + UDP-N-acetyl-alpha-D-glucosamine = di-trans,octa-cis-undecaprenyl diphospho-[N-acetyl-alpha-D-glucosaminyl-(1-&gt;4)]-N-acetyl-alpha-D-muramoyl-L-alanyl-D-glutamyl-meso-2,6-diaminopimeloyl-D-alanyl-D-alanine + UDP + H(+). It participates in cell wall biogenesis; peptidoglycan biosynthesis. In terms of biological role, cell wall formation. Catalyzes the transfer of a GlcNAc subunit on undecaprenyl-pyrophosphoryl-MurNAc-pentapeptide (lipid intermediate I) to form undecaprenyl-pyrophosphoryl-MurNAc-(pentapeptide)GlcNAc (lipid intermediate II). The chain is UDP-N-acetylglucosamine--N-acetylmuramyl-(pentapeptide) pyrophosphoryl-undecaprenol N-acetylglucosamine transferase from Granulibacter bethesdensis (strain ATCC BAA-1260 / CGDNIH1).